The chain runs to 320 residues: Cytochrome f (320 aa).

The signal sequence occupies residues 1–35; the sequence is MHTKNLFYSRTQQITQYLSALLMMVILTRTSISSA. Residues Tyr-36, Cys-56, Cys-59, and His-60 each coordinate heme. A helical transmembrane segment spans residues 286 to 306; it reads VQVLLFFFASIILAQIFLVLK.

Belongs to the cytochrome f family. The 4 large subunits of the cytochrome b6-f complex are cytochrome b6, subunit IV (17 kDa polypeptide, petD), cytochrome f and the Rieske protein, while the 4 small subunits are PetG, PetL, PetM and PetN. The complex functions as a dimer. Heme serves as cofactor.

Its subcellular location is the plastid thylakoid membrane. Component of the cytochrome b6-f complex, which mediates electron transfer between photosystem II (PSII) and photosystem I (PSI), cyclic electron flow around PSI, and state transitions. This chain is Cytochrome f, found in Cuscuta gronovii (Common dodder).